The sequence spans 375 residues: 1-deoxy-D-xylulose 5-phosphate reductoisomerase (375 aa).

Residues Thr-12, Gly-13, Ser-14, Ile-15, Asn-39, and Asn-115 each contribute to the NADPH site. Lys-116 provides a ligand contact to 1-deoxy-D-xylulose 5-phosphate. Glu-117 contributes to the NADPH binding site. A Mn(2+)-binding site is contributed by Asp-141. 1-deoxy-D-xylulose 5-phosphate is bound by residues Ser-142, Glu-143, Ser-163, and His-186. Position 143 (Glu-143) interacts with Mn(2+). An NADPH-binding site is contributed by Gly-192. Ser-199, Asn-204, Lys-205, and Glu-208 together coordinate 1-deoxy-D-xylulose 5-phosphate. Position 208 (Glu-208) interacts with Mn(2+).

The protein belongs to the DXR family. Mg(2+) is required as a cofactor. It depends on Mn(2+) as a cofactor.

The catalysed reaction is 2-C-methyl-D-erythritol 4-phosphate + NADP(+) = 1-deoxy-D-xylulose 5-phosphate + NADPH + H(+). The protein operates within isoprenoid biosynthesis; isopentenyl diphosphate biosynthesis via DXP pathway; isopentenyl diphosphate from 1-deoxy-D-xylulose 5-phosphate: step 1/6. Catalyzes the NADPH-dependent rearrangement and reduction of 1-deoxy-D-xylulose-5-phosphate (DXP) to 2-C-methyl-D-erythritol 4-phosphate (MEP). This chain is 1-deoxy-D-xylulose 5-phosphate reductoisomerase, found in Thermotoga neapolitana (strain ATCC 49049 / DSM 4359 / NBRC 107923 / NS-E).